The primary structure comprises 151 residues: UPF0178 protein Pfl01_5469 (151 aa).

This sequence belongs to the UPF0178 family.

This Pseudomonas fluorescens (strain Pf0-1) protein is UPF0178 protein Pfl01_5469.